Here is a 349-residue protein sequence, read N- to C-terminus: Small ribosomal subunit biogenesis GTPase RsgA (349 aa).

Residues 1–11 (MSKKKLSKGQQ) show a composition bias toward basic residues. Residues 1-29 (MSKKKLSKGQQRRVSANHQRRLKKTESKV) form a disordered region. The 171-residue stretch at 102-272 (HSVLTRPDYY…VIDSPGVREF (171 aa)) folds into the CP-type G domain. GTP is bound by residues 158–161 (NKID) and 212–220 (GQSGVGKSS). Residues Cys296, Cys301, His303, and Cys309 each contribute to the Zn(2+) site.

This sequence belongs to the TRAFAC class YlqF/YawG GTPase family. RsgA subfamily. In terms of assembly, monomer. Associates with 30S ribosomal subunit, binds 16S rRNA. It depends on Zn(2+) as a cofactor.

The protein resides in the cytoplasm. One of several proteins that assist in the late maturation steps of the functional core of the 30S ribosomal subunit. Helps release RbfA from mature subunits. May play a role in the assembly of ribosomal proteins into the subunit. Circularly permuted GTPase that catalyzes slow GTP hydrolysis, GTPase activity is stimulated by the 30S ribosomal subunit. In Pectobacterium carotovorum subsp. carotovorum (strain PC1), this protein is Small ribosomal subunit biogenesis GTPase RsgA.